The chain runs to 372 residues: Serine protease inhibitor 42Dd (372 aa).

The signal sequence occupies residues 1–15 (MYYLCIFLWVTSVAC). Residues Asn197 and Asn232 are each glycosylated (N-linked (GlcNAc...) asparagine).

It belongs to the serpin family. Expressed in the ovary.

The protein resides in the secreted. In terms of biological role, serine protease inhibitor with activity toward trypsin. Involved in innate immunity to fungal infection by negatively regulating the Toll signaling pathway and suppressing the expression of the antifungal peptide drosomycin. Acts upstream of SPE and grass, and downstream of the fungal cell wall pattern recognition receptor GNBP3. May function specifically in the GNBP3-dependent beta-1,3-glucan branch of the Toll pathway. The chain is Serine protease inhibitor 42Dd from Drosophila melanogaster (Fruit fly).